A 457-amino-acid chain; its full sequence is Siroheme synthase (457 aa).

A precorrin-2 dehydrogenase /sirohydrochlorin ferrochelatase region spans residues 1–204; sequence MDHLPIFCQL…NDQKAITETT (204 aa). Residues 22–23 and 43–44 each bind NAD(+); these read DV and LA. S128 carries the post-translational modification Phosphoserine. A uroporphyrinogen-III C-methyltransferase region spans residues 216 to 457; sequence GEVVLVGAGP…RDKLNWFSNH (242 aa). P225 is a binding site for S-adenosyl-L-methionine. Residue D248 is the Proton acceptor of the active site. K270 (proton donor) is an active-site residue. S-adenosyl-L-methionine-binding positions include 301–303, I306, 331–332, M382, and G411; these read GGD and TA.

This sequence in the N-terminal section; belongs to the precorrin-2 dehydrogenase / sirohydrochlorin ferrochelatase family. In the C-terminal section; belongs to the precorrin methyltransferase family.

The enzyme catalyses uroporphyrinogen III + 2 S-adenosyl-L-methionine = precorrin-2 + 2 S-adenosyl-L-homocysteine + H(+). It catalyses the reaction precorrin-2 + NAD(+) = sirohydrochlorin + NADH + 2 H(+). It carries out the reaction siroheme + 2 H(+) = sirohydrochlorin + Fe(2+). Its pathway is cofactor biosynthesis; adenosylcobalamin biosynthesis; precorrin-2 from uroporphyrinogen III: step 1/1. The protein operates within cofactor biosynthesis; adenosylcobalamin biosynthesis; sirohydrochlorin from precorrin-2: step 1/1. It functions in the pathway porphyrin-containing compound metabolism; siroheme biosynthesis; precorrin-2 from uroporphyrinogen III: step 1/1. It participates in porphyrin-containing compound metabolism; siroheme biosynthesis; siroheme from sirohydrochlorin: step 1/1. Its pathway is porphyrin-containing compound metabolism; siroheme biosynthesis; sirohydrochlorin from precorrin-2: step 1/1. Its function is as follows. Multifunctional enzyme that catalyzes the SAM-dependent methylations of uroporphyrinogen III at position C-2 and C-7 to form precorrin-2 via precorrin-1. Then it catalyzes the NAD-dependent ring dehydrogenation of precorrin-2 to yield sirohydrochlorin. Finally, it catalyzes the ferrochelation of sirohydrochlorin to yield siroheme. In Escherichia coli O8 (strain IAI1), this protein is Siroheme synthase.